The chain runs to 414 residues: Enterobactin exporter EntS (414 aa).

Over 1–21 (MNRQSWLLNLSLLKTHPAFRA) the chain is Cytoplasmic. A helical membrane pass occupies residues 22 to 42 (VFLARFISIVSLGLLGVAVPV). The Periplasmic segment spans residues 43 to 55 (QIQMMTHSTWQVG). A helical membrane pass occupies residues 56 to 76 (LSVTLTGGAMFIGLMVGGVLA). At 77-83 (DRYERKK) the chain is on the cytoplasmic side. The chain crosses the membrane as a helical span at residues 84–104 (VILLARGTCGIGFIGLCVNSL). Residues 105–109 (LPEPS) lie on the Periplasmic side of the membrane. The helical transmembrane segment at 110–130 (LLAIYLLGLWDGFFASLGVTA) threads the bilayer. The Cytoplasmic portion of the chain corresponds to 131-156 (LLAATPALVGRENLMQAGAITMLTVR). A helical transmembrane segment spans residues 157-177 (LGSVISPMLGGILLASGGVAW). Asn-178 is a topological domain (periplasmic). A helical membrane pass occupies residues 179-199 (YGLAAAGTFITLLPLLTLPRL). Topologically, residues 200-218 (PVPPQPRENPFIALLAAFR) are cytoplasmic. A helical transmembrane segment spans residues 219-239 (FLLASPLIGGIALLGGLVTMA). Over 240-256 (SAVRVLYPALAMSWQMS) the chain is Periplasmic. The helical transmembrane segment at 257-277 (AAQIGLLYAAIPLGAAIGALT) threads the bilayer. Residues 278 to 287 (SGQLAHSVRP) lie on the Cytoplasmic side of the membrane. Residues 288-307 (GLIMLVSTVGSFLAVGLFAI) traverse the membrane as a helical segment. Residues 308 to 313 (MPVWTA) lie on the Periplasmic side of the membrane. The helical transmembrane segment at 314–336 (GVICLALFGWLSAISSLLQYTLL) threads the bilayer. At 337–356 (QTQTPENMLGRMNGLWTAQN) the chain is on the cytoplasmic side. The helical transmembrane segment at 357–377 (VTGDAIGAALLGGLGAMMTPV) threads the bilayer. Residue Ala-378 is a topological domain, periplasmic. The chain crosses the membrane as a helical span at residues 379 to 399 (SASVSGFGLVIIGLLLLLVLG). The Cytoplasmic segment spans residues 400-414 (ELRRFRQTPPVSDAG).

It belongs to the major facilitator superfamily. EntS (TC 2.A.1.38) family.

It is found in the cell inner membrane. Its function is as follows. Component of an export pathway for enterobactin. In Salmonella choleraesuis (strain SC-B67), this protein is Enterobactin exporter EntS.